A 904-amino-acid chain; its full sequence is Putative pentatricopeptide repeat-containing protein At1g19290 (904 aa).

PPR repeat units follow at residues serine 154–proline 188, serine 189–proline 223, aspartate 224–serine 254, asparagine 260–arginine 294, asparagine 295–alanine 329, aspartate 330–threonine 364, asparagine 365–proline 399, aspartate 400–proline 434, threonine 435–alanine 469, aspartate 470–threonine 504, aspartate 505–proline 539, alanine 540–proline 574, threonine 575–proline 609, threonine 610–leucine 644, asparagine 645–leucine 679, asparagine 718–proline 753, aspartate 754–proline 788, asparagine 789–proline 823, and asparagine 824–arginine 858.

It belongs to the PPR family. P subfamily.

The chain is Putative pentatricopeptide repeat-containing protein At1g19290 from Arabidopsis thaliana (Mouse-ear cress).